The following is a 215-amino-acid chain: MQKSIIKNGLLLSGFALICTAAVALVNEATKDKIAEQQRLELTRILHQIVPDEIHDNDLGGSCILVHNADALGTDEPMPVYLASSANEPVALAIETIAPDGYNGNIRLIIGVDLKGKVLGVRTLTHQETPGLGDKIELRKSNWVLSFNDKVFSDKANDRWKVKKDGGDFDQFTGATITPRAYLKAVSRTLIFVSANQAEWFNRPLGCDNGANADE.

A helical transmembrane segment spans residues 9–29 (GLLLSGFALICTAAVALVNEA). The residue at position 176 (Thr176) is an FMN phosphoryl threonine.

This sequence belongs to the RnfG family. The complex is composed of six subunits: RnfA, RnfB, RnfC, RnfD, RnfE and RnfG. The cofactor is FMN.

It is found in the cell inner membrane. Part of a membrane-bound complex that couples electron transfer with translocation of ions across the membrane. The chain is Ion-translocating oxidoreductase complex subunit G from Shewanella amazonensis (strain ATCC BAA-1098 / SB2B).